The sequence spans 191 residues: Protein Ves (191 aa).

The protein belongs to the Ves family.

In Escherichia coli O127:H6 (strain E2348/69 / EPEC), this protein is Protein Ves.